The sequence spans 628 residues: Biosynthetic arginine decarboxylase (628 aa).

K99 carries the N6-(pyridoxal phosphate)lysine modification. 279-289 (VDVGGGLGIDY) contributes to the substrate binding site.

Belongs to the Orn/Lys/Arg decarboxylase class-II family. SpeA subfamily. Requires Mg(2+) as cofactor. Pyridoxal 5'-phosphate serves as cofactor.

The catalysed reaction is L-arginine + H(+) = agmatine + CO2. Functionally, catalyzes the biosynthesis of agmatine from arginine. This chain is Biosynthetic arginine decarboxylase, found in Xylella fastidiosa (strain 9a5c).